Consider the following 818-residue polypeptide: LisH domain-containing protein ARMC9 (818 aa).

One can recognise a LisH domain in the interval 7-39; it reads HESELLGLVKEYLDFAEFEDTLKTFSKECKIKG. The stretch at 204 to 230 forms a coiled coil; the sequence is QSNKEILQQLHQQLVEAERRSVTYLKR. Residue serine 582 is modified to Phosphoserine. 2 disordered regions span residues 642–755 and 790–818; these read VQWS…TTRE and SSCGPQQASRPGSTASSTRGLPSSQSHRK. The span at 701 to 711 shows a compositional bias: low complexity; sequence STPESCVSSSS. Over residues 792-818 the composition is skewed to polar residues; that stretch reads CGPQQASRPGSTASSTRGLPSSQSHRK.

As to quaternary structure, interacts with TOGARAM1, CCDC66, CEP104, CSPP1 and CEP290. Interacts with NDUFAF2. In terms of tissue distribution, strongly expressed in most melanomas and melanocytes. Weakly expressed in the testis.

Its subcellular location is the cytoplasm. It localises to the cytoskeleton. It is found in the cilium basal body. The protein resides in the cell projection. The protein localises to the cilium. Its subcellular location is the microtubule organizing center. It localises to the centrosome. It is found in the centriole. In terms of biological role, involved in ciliogenesis. It is required for appropriate acetylation and polyglutamylation of ciliary microtubules, and regulation of cilium length. Acts as a positive regulator of hedgehog (Hh)signaling. May participate in the trafficking and/or retention of GLI2 and GLI3 proteins at the ciliary tip. The polypeptide is LisH domain-containing protein ARMC9 (Homo sapiens (Human)).